The chain runs to 490 residues: MSRMAEQQLYIHGGYTSATSGRTFETINPANGNVLATVQAAGREDVDRAVKSAQQGQKIWAAMTAMERSRILRRAVDILRERNDELAKLETLDTGKAYSETSTVDIVTGADVLEYYAGLIPSLEGSQIPLRETSFVYTRREPLGVVAGIGAWNYPIQIALWKSAPALAAGNAMIFKPSEVTPLTALKLAEIYSEAGLPDGVFNVLPGVGAETGQYLTEHPGIAKVSFTGGVASGKKVMANSAASSLKEVTMELGGKSPLIVFDDADLDLAADIAMMANFFSSGQVCTNGTRVFVPAKCKAAFEQKILARVERIRAGDVFDPQTNFGPLVSFPHRDNVLRYIVKGKEEGARVLCGGDVLKGDGLDNGAWVAPTVFTDCSDEMTIVREEIFGPVMSILTYESEEEVIRRANDTDYGLAAGIVTADLNRAHRVIHQLEAGICWINTWGESPAEMPVGGYKHSGIGRENGVMTLQSYTQVKSIQVEMAKFQSIF.

3 residues coordinate K(+): Thr26, Ile27, and Asp93. NAD(+) is bound at residue 150–152 (GAW). Lys162 serves as the catalytic Charge relay system. Residue 176–179 (KPSE) coordinates NAD(+). Residue Val180 coordinates K(+). 230–233 (GVAS) provides a ligand contact to NAD(+). Leu246 lines the K(+) pocket. Glu252 (proton acceptor) is an active-site residue. Gly254, Cys286, and Glu387 together coordinate NAD(+). Cys286 serves as the catalytic Nucleophile. Cys286 carries the post-translational modification Cysteine sulfenic acid (-SOH). 2 residues coordinate K(+): Lys457 and Gly460. Glu464 serves as the catalytic Charge relay system.

The protein belongs to the aldehyde dehydrogenase family. In terms of assembly, dimer of dimers. K(+) is required as a cofactor.

The enzyme catalyses betaine aldehyde + NAD(+) + H2O = glycine betaine + NADH + 2 H(+). Its pathway is amine and polyamine biosynthesis; betaine biosynthesis via choline pathway; betaine from betaine aldehyde: step 1/1. In terms of biological role, involved in the biosynthesis of the osmoprotectant glycine betaine. Catalyzes the irreversible oxidation of betaine aldehyde to the corresponding acid. This Escherichia coli O139:H28 (strain E24377A / ETEC) protein is Betaine aldehyde dehydrogenase.